We begin with the raw amino-acid sequence, 149 residues long: Calmodulin (149 aa).

Ala-2 carries the post-translational modification N-acetylalanine. 4 consecutive EF-hand domains span residues 8–43 (EQIAEFKEAFSLFDKDGDGTITTKELGTVMRSLGQN), 44–79 (PTEAELQDMINEVDADGNGTIDFPEFLTMMARKMKD), 81–116 (DSEEEIREAFRVFDKDGNGFISAAELRHVMTNLGEK), and 117–149 (LTDEEVDEMIREADIDGDGQVNYEEFVTMMMSK). Asp-21, Asp-23, Asp-25, Thr-27, Glu-32, Asp-57, Asp-59, Asn-61, Thr-63, Glu-68, Asp-94, Asp-96, Asn-98, and Glu-105 together coordinate Ca(2+). Lys-116 bears the N6,N6,N6-trimethyllysine mark. Positions 130, 132, 134, 136, and 141 each coordinate Ca(2+).

Belongs to the calmodulin family.

In terms of biological role, calmodulin mediates the control of a large number of enzymes, ion channels and other proteins by Ca(2+). Among the enzymes to be stimulated by the calmodulin-Ca(2+) complex are a number of protein kinases and phosphatases. In Lumbricus rubellus (Humus earthworm), this protein is Calmodulin.